Here is a 356-residue protein sequence, read N- to C-terminus: MGQTLSEPVTKKESASCANENYLVGSSCMQGWRVDMEDAHTHLLSLPDDPKCAFFAVYDGHGGSKVSQYSGINLHKKVVAQKEFSEGNMKEAIEKGFLELDQQMRVDEETKDDVSGTTAVVVLIKEGDVYCGNAGDSRAVSSVVGEARPLSFDHKPSHETEARRIIAAGGWVEFNRVNGNLALSRALGDFAFKNCDTKPAEEQIVTAFPDVITDKLTPDHEFIVLACDGIWDVMTNQEVVDFVREKLAEKRDPQSICEELLTRCLAPDCQMGGLGCDNMTVVLVGLLHGQSPDTLFTKCARPAVFTGVNNEDGDQNQIQQDISRVINNFDGEQRVNAANQEEEEDDNEPAPANFQV.

The PPM-type phosphatase domain maps to leucine 23–leucine 286. Aspartate 59, glycine 60, aspartate 228, and aspartate 277 together coordinate Mn(2+). The interval asparagine 336–valine 356 is disordered.

Belongs to the PP2C family. Mg(2+) serves as cofactor. It depends on Mn(2+) as a cofactor.

The enzyme catalyses O-phospho-L-seryl-[protein] + H2O = L-seryl-[protein] + phosphate. It catalyses the reaction O-phospho-L-threonyl-[protein] + H2O = L-threonyl-[protein] + phosphate. In Caenorhabditis elegans, this protein is Probable protein phosphatase 2C T23F11.1 (ppm-2).